Here is a 271-residue protein sequence, read N- to C-terminus: Putative phosphoenolpyruvate synthase regulatory protein (271 aa).

An ADP-binding site is contributed by 151 to 158 (GVSRSGKT).

Belongs to the pyruvate, phosphate/water dikinase regulatory protein family. PSRP subfamily.

The enzyme catalyses [pyruvate, water dikinase] + ADP = [pyruvate, water dikinase]-phosphate + AMP + H(+). It catalyses the reaction [pyruvate, water dikinase]-phosphate + phosphate + H(+) = [pyruvate, water dikinase] + diphosphate. In terms of biological role, bifunctional serine/threonine kinase and phosphorylase involved in the regulation of the phosphoenolpyruvate synthase (PEPS) by catalyzing its phosphorylation/dephosphorylation. This Burkholderia cenocepacia (strain ATCC BAA-245 / DSM 16553 / LMG 16656 / NCTC 13227 / J2315 / CF5610) (Burkholderia cepacia (strain J2315)) protein is Putative phosphoenolpyruvate synthase regulatory protein.